A 248-amino-acid polypeptide reads, in one-letter code: Anamorsin homolog (248 aa).

The N-terminal SAM-like domain stretch occupies residues 4–130 (FKGLQKSLYI…ETGSSARLSF (127 aa)). Positions 131–161 (AKKTSSVNVWKISGDDEELIDEEELLDEEDK) are linker. 4 residues coordinate [2Fe-2S] cluster: C172, C181, C184, and C186. The segment at 172 to 186 (CSTTGKRKACKNCSC) is fe-S binding site A. C209, C212, C220, and C223 together coordinate [4Fe-4S] cluster. 2 short sequence motifs (cx2C motif) span residues 209 to 212 (CGNC) and 220 to 223 (CSTC). The fe-S binding site B stretch occupies residues 209–223 (CGNCYLGDAFRCSTC).

This sequence belongs to the anamorsin family. Monomer. It depends on [2Fe-2S] cluster as a cofactor. [4Fe-4S] cluster is required as a cofactor.

The protein localises to the cytoplasm. It localises to the mitochondrion intermembrane space. In terms of biological role, component of the cytosolic iron-sulfur (Fe-S) protein assembly (CIA) machinery. Required for the maturation of extramitochondrial Fe-S proteins. Part of an electron transfer chain functioning in an early step of cytosolic Fe-S biogenesis, facilitating the de novo assembly of a [4Fe-4S] cluster on the cytosolic Fe-S scaffold complex. Electrons are transferred from NADPH via a FAD- and FMN-containing diflavin oxidoreductase. Together with the diflavin oxidoreductase, also required for the assembly of the diferric tyrosyl radical cofactor of ribonucleotide reductase (RNR), probably by providing electrons for reduction during radical cofactor maturation in the catalytic small subunit. The sequence is that of Anamorsin homolog from Drosophila virilis (Fruit fly).